Here is a 307-residue protein sequence, read N- to C-terminus: Agmatinase (307 aa).

Mn(2+)-binding residues include H126, D149, H151, D153, D230, and D232.

The protein belongs to the arginase family. Agmatinase subfamily. The cofactor is Mn(2+).

The catalysed reaction is agmatine + H2O = urea + putrescine. It functions in the pathway amine and polyamine biosynthesis; putrescine biosynthesis via agmatine pathway; putrescine from agmatine: step 1/1. Its function is as follows. Catalyzes the formation of putrescine from agmatine. In Sodalis glossinidius (strain morsitans), this protein is Agmatinase.